A 252-amino-acid chain; its full sequence is Ribosomal RNA small subunit methyltransferase J (252 aa).

S-adenosyl-L-methionine contacts are provided by residues 101-102, 117-118, 153-154, and Asp-171; these read RD, ER, and SS.

The protein belongs to the methyltransferase superfamily. RsmJ family.

The protein localises to the cytoplasm. It catalyses the reaction guanosine(1516) in 16S rRNA + S-adenosyl-L-methionine = N(2)-methylguanosine(1516) in 16S rRNA + S-adenosyl-L-homocysteine + H(+). Its function is as follows. Specifically methylates the guanosine in position 1516 of 16S rRNA. The protein is Ribosomal RNA small subunit methyltransferase J of Salmonella typhimurium (strain LT2 / SGSC1412 / ATCC 700720).